Consider the following 250-residue polypeptide: MSAAAAPAPERGWKSEKVDEAQALARSCAARRPDFQPCDGLSICATHSHGKCFKLHWCCHLGWCHCKYVYQPMTPVEQLPSTEIPAKPREPANTIQISVSLTEHFLKFASVFQPPLPPDSPRYCMISDLFIDNYQVKCINGKMCYVQKQPAPHSHKMSPEEVSAHDAFISKESNTPKIDHCSSPSSSEDSGINAIGAHYVESCDEDTEEGAELSSEEDYSPESSWEPDECTLLSPSQSDLEVIETIETTV.

A disordered region spans residues 201 to 250 (ESCDEDTEEGAELSSEEDYSPESSWEPDECTLLSPSQSDLEVIETIETTV). The segment covering 202–229 (SCDEDTEEGAELSSEEDYSPESSWEPDE) has biased composition (acidic residues).

This sequence belongs to the UPF0524 family.

In terms of biological role, may play a role in neuronal and neurobehavioral development. In Bos taurus (Bovine), this protein is UPF0524 protein C3orf70 homolog.